The primary structure comprises 160 residues: Large ribosomal subunit protein bL17 (160 aa).

Residues 123–141 show a composition bias toward basic and acidic residues; sequence DEKRQKRAEARAKRREEMQ. The interval 123–160 is disordered; that stretch reads DEKRQKRAEARAKRREEMQKAMAEQQQAEGGEPEGGNE. Positions 142 to 152 are enriched in low complexity; sequence KAMAEQQQAEG.

It belongs to the bacterial ribosomal protein bL17 family. In terms of assembly, part of the 50S ribosomal subunit. Contacts protein L32.

This Acidobacterium capsulatum (strain ATCC 51196 / DSM 11244 / BCRC 80197 / JCM 7670 / NBRC 15755 / NCIMB 13165 / 161) protein is Large ribosomal subunit protein bL17.